The primary structure comprises 2527 residues: Leucine-rich repeat serine/threonine-protein kinase 2 (2527 aa).

The segment at 1-969 (MASGACQGCE…RSSRLPSHMR (969 aa)) is required for RAB29-mediated activation. The stretch at 9–33 (CEEEEEEEALKKLIVRLNNVQEGKQ) forms a coiled coil. A phosphoserine mark is found at Ser910, Ser935, Ser955, and Ser973. Residues 957–979 (ESLRSSRLPSHMRQSDSSSSLAS) are disordered. A compositionally biased stretch (low complexity) spans 961-978 (SSRLPSHMRQSDSSSSLA). 13 LRR repeats span residues 983–1004 (HITS…SQKC), 1012–1033 (HLTK…LCET), 1036–1057 (CLIH…VLKM), 1059–1080 (RITN…DPAM), 1084–1105 (SLKQ…LAQV), 1108–1129 (KLEQ…LSLK), 1130–1150 (ELKI…DFLE), 1156–1171 (ESFS…MPAL), 1174–1196 (SITS…FSLP), 1197–1218 (HLRS…AHWK), 1221–1245 (NLRE…HVWS), 1246–1267 (RVEK…IGCL), and 1269–1291 (NLTS…MGKL). A Phosphoserine; by autocatalysis modification is found at Ser1292. The region spanning 1328 to 1511 (KAVPYNRMKL…KTIINESLNF (184 aa)) is the Roc domain. 1341 to 1348 (GNTGSGKT) contacts GTP. Ser1444 is subject to Phosphoserine. The COR domain maps to 1543–1740 (TEFPVINRKH…RMYWRQGIYL (198 aa)). Positions 1879–2146 (EAPEFLLGDG…LICLMRHILI (268 aa)) constitute a Protein kinase domain. ATP-binding residues include Leu1885, Asp1887, Gly1888, Gly1891, Val1893, Ala1904, Lys1906, Met1947, Glu1948, Ala1950, Ser1954, and Arg1957. Asp1994 serves as the catalytic Proton acceptor. ATP-binding residues include His1998, Leu2001, Ala2016, and Asp2017. 2098–2121 (EYGCAPWPMVEKLITKCLKENPQE) serves as a coordination point for GTP. WD repeat units lie at residues 2139 to 2183 (CLMR…SLFD), 2188 to 2228 (RYSY…LVIN), 2233 to 2276 (TKRH…MIFE), 2281 to 2327 (KCKG…FSFS), 2333 to 2377 (QKLI…EVWD), 2402 to 2438 (KESK…LLLD), and 2443 to 2497 (RVIR…SIWD). 2295-2298 (DVST) lines the GTP pocket.

Belongs to the protein kinase superfamily. TKL Ser/Thr protein kinase family. As to quaternary structure, homodimer. Homotetramer; when activated by GTP-bound RAB29. Interacts with PRKN, PRDX3 and TPCN2. Interacts with VPS35. Interacts (via N-terminus) with RAB29; this interaction is direct and stimulates kinase activity. Interacts (via ROC domain) with SEC16A. Interacts with APP; interaction promotes phosphorylation of 'Thr-743' of APP. Interacts with MAPT. Interacts with RAB8A, RAB10, and RAB12. Interacts (via N-terminus) with RAB32. Interacts with YWHAG; this interaction is dependent on phosphorylation of Ser-910 and either Ser-935 or Ser-1444. Interacts with SFN; this interaction is dependent on phosphorylation of Ser-910 and/or Ser-935. The cofactor is Mg(2+). In terms of processing, autophosphorylated at Ser-1292. Autophosphorylation is stimulated by RAB29. Phosphorylation of Ser-910 and Ser-935 or Ser-1444 facilitates interaction with YWHAG. Phosphorylation of Ser-910 and/or Ser-935 facilitates interaction with SFN. Post-translationally, ubiquitinated by TRIM1; undergoes 'Lys-48'-linked polyubiquitination leading to proteasomal degradation. In terms of tissue distribution, expressed in the brain (at protein level). Detected throughout the adult brain. Expressed in deep cerebral cortex layers, superficial cingulate cortex layers, the piriform cortex, hippocampal formation, caudate putamen, substantia nigra, the basolateral and basomedial anterior amygdala nuclei, reticular thalamic nucleus and also in the cerebellar granular cell layer. Highly expressed in the striatum, cortex and olfactory tubercle. Little or no expression in the substantia nigra, where dopaminergic neurons preferentially degenerate in Parkinson disease. Expression is particularly high in brain dopaminoceptive areas. High and strikingly specific expression in striatum and parts of cortex and no signals in dopamine neurons.

The protein localises to the cytoplasmic vesicle. The protein resides in the perikaryon. It is found in the cell projection. Its subcellular location is the axon. It localises to the dendrite. The protein localises to the golgi apparatus membrane. The protein resides in the endoplasmic reticulum membrane. It is found in the secretory vesicle. Its subcellular location is the synaptic vesicle membrane. It localises to the endosome. The protein localises to the lysosome. The protein resides in the mitochondrion outer membrane. It is found in the cytoplasm. Its subcellular location is the cytoskeleton. It localises to the phagosome. It catalyses the reaction L-threonyl-[protein] + ATP = O-phospho-L-threonyl-[protein] + ADP + H(+). The enzyme catalyses L-seryl-[protein] + ATP = O-phospho-L-seryl-[protein] + ADP + H(+). It carries out the reaction GTP + H2O = GDP + phosphate + H(+). Its activity is regulated as follows. Kinase activity is regulated by the GTPase activity of the ROC domain. GTP-bound LRRK2 kinase activity is stimulated by RAB29. Phosphorylation of RAB10 'Thr-73' is stimulated by RAB29 and RAB32. Inhibited by small molecule inhibitors MLi-2 and LRRK2-IN-1. Serine/threonine-protein kinase which phosphorylates a broad range of proteins involved in multiple processes such as neuronal plasticity, innate immunity, autophagy, and vesicle trafficking. Is a key regulator of RAB GTPases by regulating the GTP/GDP exchange and interaction partners of RABs through phosphorylation. Phosphorylates RAB3A, RAB3B, RAB3C, RAB3D, RAB8A, RAB8B, RAB10, RAB12, RAB29, RAB35, and RAB43. Regulates the RAB3IP-catalyzed GDP/GTP exchange for RAB8A through the phosphorylation of 'Thr-72' on RAB8A. Inhibits the interaction between RAB8A and GDI1 and/or GDI2 by phosphorylating 'Thr-72' on RAB8A. Regulates primary ciliogenesis through phosphorylation of RAB8A and RAB10, which promotes SHH signaling in the brain. Together with RAB29, plays a role in the retrograde trafficking pathway for recycling proteins, such as mannose-6-phosphate receptor (M6PR), between lysosomes and the Golgi apparatus in a retromer-dependent manner. Regulates neuronal process morphology in the intact central nervous system (CNS). Plays an important role in recruiting SEC16A to endoplasmic reticulum exit sites (ERES) and in regulating ER to Golgi vesicle-mediated transport and ERES organization. Positively regulates autophagy through a calcium-dependent activation of the CaMKK/AMPK signaling pathway. The process involves activation of nicotinic acid adenine dinucleotide phosphate (NAADP) receptors, increase in lysosomal pH, and calcium release from lysosomes. Phosphorylates PRDX3. By phosphorylating APP on 'Thr-743', which promotes the production and the nuclear translocation of the APP intracellular domain (AICD), regulates dopaminergic neuron apoptosis. Acts as a positive regulator of innate immunity by mediating phosphorylation of RIPK2 downstream of NOD1 and NOD2, thereby enhancing RIPK2 activation. Independent of its kinase activity, inhibits the proteasomal degradation of MAPT, thus promoting MAPT oligomerization and secretion. In addition, has GTPase activity via its Roc domain which regulates LRKK2 kinase activity. Recruited by RAB29/RAB7L1 to overloaded lysosomes where it phosphorylates and stabilizes RAB8A and RAB10 which promote lysosomal content release and suppress lysosomal enlargement through the EHBP1 and EHBP1L1 effector proteins. This Mus musculus (Mouse) protein is Leucine-rich repeat serine/threonine-protein kinase 2 (Lrrk2).